A 556-amino-acid polypeptide reads, in one-letter code: 2-succinyl-5-enolpyruvyl-6-hydroxy-3-cyclohexene-1-carboxylate synthase (556 aa).

The protein belongs to the TPP enzyme family. MenD subfamily. In terms of assembly, homodimer. It depends on Mg(2+) as a cofactor. Requires Mn(2+) as cofactor. Thiamine diphosphate is required as a cofactor.

The enzyme catalyses isochorismate + 2-oxoglutarate + H(+) = 5-enolpyruvoyl-6-hydroxy-2-succinyl-cyclohex-3-ene-1-carboxylate + CO2. It participates in quinol/quinone metabolism; 1,4-dihydroxy-2-naphthoate biosynthesis; 1,4-dihydroxy-2-naphthoate from chorismate: step 2/7. It functions in the pathway quinol/quinone metabolism; menaquinone biosynthesis. Its function is as follows. Catalyzes the thiamine diphosphate-dependent decarboxylation of 2-oxoglutarate and the subsequent addition of the resulting succinic semialdehyde-thiamine pyrophosphate anion to isochorismate to yield 2-succinyl-5-enolpyruvyl-6-hydroxy-3-cyclohexene-1-carboxylate (SEPHCHC). The sequence is that of 2-succinyl-5-enolpyruvyl-6-hydroxy-3-cyclohexene-1-carboxylate synthase from Escherichia coli (strain 55989 / EAEC).